The following is a 428-amino-acid chain: Elongation factor 1-alpha (428 aa).

A tr-type G domain is found at 5–217 (KPHVNIVFIG…DQIPEPEKPT (213 aa)). The segment at 14 to 21 (GHVDHGKS) is G1. 14–21 (GHVDHGKS) provides a ligand contact to GTP. S21 is a binding site for Mg(2+). Residues 68–72 (GITID) are G2. A G3 region spans residues 89-92 (DAPG). GTP-binding positions include 89-93 (DAPGH) and 144-147 (NKMD). Residues 144–147 (NKMD) are G4. Positions 181 to 183 (SAW) are G5.

This sequence belongs to the TRAFAC class translation factor GTPase superfamily. Classic translation factor GTPase family. EF-Tu/EF-1A subfamily.

It is found in the cytoplasm. The catalysed reaction is GTP + H2O = GDP + phosphate + H(+). GTP hydrolase that promotes the GTP-dependent binding of aminoacyl-tRNA to the A-site of ribosomes during protein biosynthesis. The polypeptide is Elongation factor 1-alpha (Thermococcus sibiricus (strain DSM 12597 / MM 739)).